Reading from the N-terminus, the 576-residue chain is MDAKTFDKSKLPSRHVTVGPERAPHRSYYYAMGLTEEEINQPFVGVATCWNEAAPCNIALMRQAQSVKKGVKAAAGTPREFCTITVTDGIAMGHQGMKSSLASRDVIADSVELTMRGHCYDALVGLAGCDKSLPGMMMSMVRLNVPSVFMYGGSILPGHFKGKDVTVVDVFEAVGQHSAGNMEDEELHALECVACPSAGACGGQFTANTMACVSEAMGLALPGSAGAPAPYESRDEYAEASGRAVMHLLANNIRPRDIVTRKALENAAVIVAATGGSTNGGLHLPAIAHEAGIDFDLMEVAEIFKKTPYITDLKPGGNYVAKDLHEAGGVSMVLKVLLDGGYLHGDCLTVTGQSLADNLKDVKFNPDQKVVYPLSNPLSPTGGVVGLQGSLAPDGAIVKVAGMEKDHLRFSGPARCFDSEEECFEAVDKRQYKEGEVLVIRYEGPKGGPGMREMLSTTAALYGQGMGDKVALITDGRFSGGTRGFCIGHVGPEAAVGGPIALIEDGDIITIDAENGTIDLEVDEAVLEKRRANWKPRETMYASGALWKYAQLVGTARKGAVTHPGGKAEKHVYADI.

Cysteine 56 contacts [2Fe-2S] cluster. Residue aspartate 88 coordinates Mg(2+). Cysteine 129 contributes to the [2Fe-2S] cluster binding site. Mg(2+)-binding residues include aspartate 130 and lysine 131. An N6-carboxylysine modification is found at lysine 131. Cysteine 201 provides a ligand contact to [2Fe-2S] cluster. A Mg(2+)-binding site is contributed by glutamate 453. Residue serine 479 is the Proton acceptor of the active site.

Belongs to the IlvD/Edd family. In terms of assembly, homodimer. It depends on [2Fe-2S] cluster as a cofactor. Mg(2+) serves as cofactor.

The enzyme catalyses (2R)-2,3-dihydroxy-3-methylbutanoate = 3-methyl-2-oxobutanoate + H2O. It catalyses the reaction (2R,3R)-2,3-dihydroxy-3-methylpentanoate = (S)-3-methyl-2-oxopentanoate + H2O. Its pathway is amino-acid biosynthesis; L-isoleucine biosynthesis; L-isoleucine from 2-oxobutanoate: step 3/4. The protein operates within amino-acid biosynthesis; L-valine biosynthesis; L-valine from pyruvate: step 3/4. Its function is as follows. Functions in the biosynthesis of branched-chain amino acids. Catalyzes the dehydration of (2R,3R)-2,3-dihydroxy-3-methylpentanoate (2,3-dihydroxy-3-methylvalerate) into 2-oxo-3-methylpentanoate (2-oxo-3-methylvalerate) and of (2R)-2,3-dihydroxy-3-methylbutanoate (2,3-dihydroxyisovalerate) into 2-oxo-3-methylbutanoate (2-oxoisovalerate), the penultimate precursor to L-isoleucine and L-valine, respectively. The sequence is that of Dihydroxy-acid dehydratase from Parvibaculum lavamentivorans (strain DS-1 / DSM 13023 / NCIMB 13966).